The chain runs to 226 residues: Leucyl/phenylalanyl-tRNA--protein transferase (226 aa).

The protein belongs to the L/F-transferase family.

It is found in the cytoplasm. The enzyme catalyses N-terminal L-lysyl-[protein] + L-leucyl-tRNA(Leu) = N-terminal L-leucyl-L-lysyl-[protein] + tRNA(Leu) + H(+). The catalysed reaction is N-terminal L-arginyl-[protein] + L-leucyl-tRNA(Leu) = N-terminal L-leucyl-L-arginyl-[protein] + tRNA(Leu) + H(+). It catalyses the reaction L-phenylalanyl-tRNA(Phe) + an N-terminal L-alpha-aminoacyl-[protein] = an N-terminal L-phenylalanyl-L-alpha-aminoacyl-[protein] + tRNA(Phe). Functionally, functions in the N-end rule pathway of protein degradation where it conjugates Leu, Phe and, less efficiently, Met from aminoacyl-tRNAs to the N-termini of proteins containing an N-terminal arginine or lysine. This Pseudomonas fluorescens (strain ATCC BAA-477 / NRRL B-23932 / Pf-5) protein is Leucyl/phenylalanyl-tRNA--protein transferase.